A 307-amino-acid chain; its full sequence is Ornithine carbamoyltransferase (307 aa).

Carbamoyl phosphate contacts are provided by residues 51–54 (STRT), Q78, R102, and 129–132 (HPVQ). Residues N159, D223, and 227 to 228 (SM) contribute to the L-ornithine site. Carbamoyl phosphate-binding positions include 263-264 (CL) and R291.

The protein belongs to the aspartate/ornithine carbamoyltransferase superfamily. OTCase family.

Its subcellular location is the cytoplasm. It carries out the reaction carbamoyl phosphate + L-ornithine = L-citrulline + phosphate + H(+). It participates in amino-acid biosynthesis; L-arginine biosynthesis; L-arginine from L-ornithine and carbamoyl phosphate: step 1/3. Reversibly catalyzes the transfer of the carbamoyl group from carbamoyl phosphate (CP) to the N(epsilon) atom of ornithine (ORN) to produce L-citrulline. The polypeptide is Ornithine carbamoyltransferase (Wolinella succinogenes (strain ATCC 29543 / DSM 1740 / CCUG 13145 / JCM 31913 / LMG 7466 / NCTC 11488 / FDC 602W) (Vibrio succinogenes)).